The sequence spans 252 residues: Chitooligosaccharide deacetylase (252 aa).

Mg(2+) is bound by residues H61 and H125.

Belongs to the YdjC deacetylase family. ChbG subfamily. Homodimer. Mg(2+) serves as cofactor.

The protein resides in the cytoplasm. The enzyme catalyses N,N'-diacetylchitobiose + H2O = N-acetyl-beta-D-glucosaminyl-(1-&gt;4)-D-glucosamine + acetate. It catalyses the reaction diacetylchitobiose-6'-phosphate + H2O = N'-monoacetylchitobiose-6'-phosphate + acetate. It functions in the pathway glycan degradation; chitin degradation. Its function is as follows. Involved in the degradation of chitin. ChbG is essential for growth on the acetylated chitooligosaccharides chitobiose and chitotriose but is dispensable for growth on cellobiose and chitosan dimer, the deacetylated form of chitobiose. Deacetylation of chitobiose-6-P and chitotriose-6-P is necessary for both the activation of the chb promoter by the regulatory protein ChbR and the hydrolysis of phosphorylated beta-glucosides by the phospho-beta-glucosidase ChbF. Catalyzes the removal of only one acetyl group from chitobiose-6-P to yield monoacetylchitobiose-6-P, the inducer of ChbR and the substrate of ChbF. The sequence is that of Chitooligosaccharide deacetylase from Klebsiella pneumoniae (strain 342).